Here is a 665-residue protein sequence, read N- to C-terminus: DNA ligase (665 aa).

NAD(+) contacts are provided by residues 31 to 35 (DQEFD), 80 to 81 (SL), and glutamate 110. Lysine 112 serves as the catalytic N6-AMP-lysine intermediate. Residues arginine 133, glutamate 170, lysine 285, and lysine 309 each contribute to the NAD(+) site. Cysteine 403, cysteine 406, cysteine 421, and cysteine 427 together coordinate Zn(2+). A BRCT domain is found at 587–665 (EHTDKLAGKS…SEEEFLQMIE (79 aa)).

It belongs to the NAD-dependent DNA ligase family. LigA subfamily. It depends on Mg(2+) as a cofactor. Requires Mn(2+) as cofactor.

It carries out the reaction NAD(+) + (deoxyribonucleotide)n-3'-hydroxyl + 5'-phospho-(deoxyribonucleotide)m = (deoxyribonucleotide)n+m + AMP + beta-nicotinamide D-nucleotide.. Functionally, DNA ligase that catalyzes the formation of phosphodiester linkages between 5'-phosphoryl and 3'-hydroxyl groups in double-stranded DNA using NAD as a coenzyme and as the energy source for the reaction. It is essential for DNA replication and repair of damaged DNA. The protein is DNA ligase of Phocaeicola vulgatus (strain ATCC 8482 / DSM 1447 / JCM 5826 / CCUG 4940 / NBRC 14291 / NCTC 11154) (Bacteroides vulgatus).